The following is a 143-amino-acid chain: Ribonuclease H (143 aa).

Residues 1–141 enclose the RNase H type-1 domain; sequence MKHVEIFTDG…VDKLASDAAL (141 aa). Residues D9, E47, D69, and D133 each contribute to the Mg(2+) site.

The protein belongs to the RNase H family. In terms of assembly, monomer. Requires Mg(2+) as cofactor.

It localises to the cytoplasm. The catalysed reaction is Endonucleolytic cleavage to 5'-phosphomonoester.. In terms of biological role, endonuclease that specifically degrades the RNA of RNA-DNA hybrids. The sequence is that of Ribonuclease H from Novosphingobium aromaticivorans (strain ATCC 700278 / DSM 12444 / CCUG 56034 / CIP 105152 / NBRC 16084 / F199).